We begin with the raw amino-acid sequence, 233 residues long: Snake venom serine protease BthaTL (233 aa).

The Peptidase S1 domain maps to 1–224 (VIGGDECDIN…YLPWIQSIIA (224 aa)). 6 disulfide bridges follow: Cys-7–Cys-138, Cys-25–Cys-41, Cys-73–Cys-231, Cys-117–Cys-185, Cys-149–Cys-164, and Cys-175–Cys-200. Active-site charge relay system residues include His-40 and Asp-85. The active-site Charge relay system is Ser-179.

The protein belongs to the peptidase S1 family. Snake venom subfamily. Monomer. Expressed by the venom gland.

Its subcellular location is the secreted. In terms of biological role, snake venom serine protease that may act in the hemostasis system of the prey. This chain is Snake venom serine protease BthaTL, found in Bothrops alternatus (Urutu).